A 144-amino-acid chain; its full sequence is Interferon-induced transmembrane protein 2 (144 aa).

The residue at position 1 (methionine 1) is an N-acetylmethionine. The Cytoplasmic portion of the chain corresponds to 1–56; sequence MSHNSQAFLSTNAGLPPSYETIKEEYGVTELGEPSNSAVVRTTVINMPREVSVPDH. Tyrosine 19 is subject to Phosphotyrosine. Residues 57 to 77 constitute an intramembrane region (helical); the sequence is VVWSLFNTLFFNACCLGFVAY. S-palmitoyl cysteine attachment occurs at residues cysteine 70, cysteine 71, and cysteine 104. Over 78–110 the chain is Cytoplasmic; sequence AYSVKSRDRKMVGDVVGAQAYASTAKCLNISSL. A helical transmembrane segment spans residues 111-131; that stretch reads IFSILMVIICIIIFSTTSVVV. The Extracellular portion of the chain corresponds to 132-144; sequence FQSFAQRTPHSGF.

It belongs to the CD225/Dispanin family. Interacts with CD81. Palmitoylation on membrane-proximal cysteines controls clustering in membrane compartments and antiviral activity. Post-translationally, phosphorylation at Tyr-19 is required for endosomal and lysosomal location. In terms of tissue distribution, predominantly expressed in nascent primordial germ cells, as well as in gonadal germ cells.

The protein localises to the cell membrane. The protein resides in the lysosome membrane. It is found in the late endosome membrane. Functionally, IFN-induced antiviral protein which inhibits the entry of viruses to the host cell cytoplasm, permitting endocytosis, but preventing subsequent viral fusion and release of viral contents into the cytosol. Active against multiple viruses, including influenza A virus, SARS coronavirus (SARS-CoV), Marburg virus (MARV) and Ebola virus (EBOV), Dengue virus (DNV) and West Nile virus (WNV). Can inhibit: influenza virus hemagglutinin protein-mediated viral entry, MARV and EBOV GP1,2-mediated viral entry and SARS-CoV S protein-mediated viral entry. Induces cell cycle arrest and mediates apoptosis by caspase activation and in p53-independent manner. The sequence is that of Interferon-induced transmembrane protein 2 (Ifitm2) from Mus musculus (Mouse).